We begin with the raw amino-acid sequence, 273 residues long: DNA replication complex GINS protein psf2 (273 aa).

Disordered stretches follow at residues 88 to 110 and 240 to 273; these read KEDPEAFSPPPPPPSRALYSQPG and ASAEATRREEEEEARRGGDYGGDGDEDSDEDMGL. Over residues 244–257 the composition is skewed to basic and acidic residues; it reads ATRREEEEEARRGG. Residues 261-273 show a composition bias toward acidic residues; the sequence is GDGDEDSDEDMGL.

It belongs to the GINS2/PSF2 family. As to quaternary structure, component of the GINS complex which is a heterotetramer of div-26/sld5, drc-1/psf1, drc-2/psf2 and drc-3/psf3.

It localises to the nucleus. Its function is as follows. The GINS complex plays an essential role in the initiation of DNA replication. Has a role in chromosome segregation. This is DNA replication complex GINS protein psf2 (drc-2) from Neurospora crassa (strain ATCC 24698 / 74-OR23-1A / CBS 708.71 / DSM 1257 / FGSC 987).